We begin with the raw amino-acid sequence, 279 residues long: NAD kinase (279 aa).

Residue Asp-61 is the Proton acceptor of the active site. NAD(+) is bound by residues 61-62 (DG), 138-139 (ND), Lys-149, Lys-166, Asp-168, and 179-184 (TGYSFS).

This sequence belongs to the NAD kinase family. A divalent metal cation serves as cofactor.

The protein localises to the cytoplasm. It catalyses the reaction NAD(+) + ATP = ADP + NADP(+) + H(+). Involved in the regulation of the intracellular balance of NAD and NADP, and is a key enzyme in the biosynthesis of NADP. Catalyzes specifically the phosphorylation on 2'-hydroxyl of the adenosine moiety of NAD to yield NADP. This Borrelia garinii subsp. bavariensis (strain ATCC BAA-2496 / DSM 23469 / PBi) (Borreliella bavariensis) protein is NAD kinase.